A 450-amino-acid chain; its full sequence is MQPPELEIGMPKRHREHIRKNLNILVEWTNYERLAMECVQQGILTVQMLRNTQDLNGKPFNMDEKDVRVEQHRRLLLKITQRGPTAYNLLINALRNINCLDAAVLLESVDESDSRPPFISLNERRTSRKSADIVDTPSPEASEGPCVSKLRNEPLGALTPYVGVVDGPEVKKSKKIHGGDSAILGTYKMQSRFNRGVLLMVNIMDYPDQNRRRIGAEKDSKSLIHLFQELNFTIFPYGNVNQDQFFKLLTMVTSSSYVQNTECFVMVLMTHGNSVEGKEKVEFCDGSVVDMQKIKDHFQTAKCPYLVNKPKVLMFPFCRGDEYDLGHPKNQGNLMEPVYTAQEEKWPDTQTEGIPSPSTNVPSLADTLVCYANTPGYVTHRDLDTGSWYIQKFCQVMADHAHDTDLEDILKKTSEAVGNKRTKKGSMQTGAYDNLGFNKKLYFNPGFFNE.

Positions 1–134 (MQPPELEIGM…RTSRKSADIV (134 aa)) are excised as a propeptide. The CARD domain maps to 64 to 109 (EKDVRVEQHRRLLLKITQRGPTAYNLLINALRNINCLDAAVLLESV). Residues 114–125 (SRPPFISLNERR) are required for binding Diap1. Catalysis depends on residues His-271 and Cys-318. A propeptide spanning residues 321–324 (DEYD) is cleaved from the precursor.

Belongs to the peptidase C14A family. As to quaternary structure, interacts (via residues 114-125) with Diap1 (via BIR 2 domain); binding blocks Dronc-mediated cell death. Can form a stable complex with Drice. Rpr, hid and grim can out-compete Dronc for binding Diap1, therefore removing Diap1-mediated ubiquitination. Interacts (via CARD domain) with Dark (via Dark CARD and WD domains); the interaction stimulates Dark oligomerization to form the apoptosome and brings pairs of Dronc molecules together on the apoptosome to facilitate their dimerization and activation by autocatalytic cleavage. Binding to Dark stimulates apoptosome assembly. After autocatalytic cleavage the Dronc caspase domain dissociates from the apoptosome but the CARD domain remains associated. In terms of processing, ubiquitinated by Diap1, leading to its subsequent degradation. In terms of tissue distribution, ubiquitously expressed in embryos during early stages of development. In late third instar larvae, dramatic up-regulation in salivary glands and midgut before histolysis of these tissues.

Its subcellular location is the cytoplasm. The enzyme catalyses Strict requirement for an Asp residue at position P1 and with a marked preference for His at position P2. It has a preferred cleavage sequence of Leu-Gly-His-Asp-|-Xaa.. Zymogen activated by autocatalytic cleavage; association with the Dark apoptosome brings multiple molecules together to facilitate their dimerization and activation by autocatalytic cleavage. Functionally, involved in the activation cascade of caspases responsible for apoptosis execution. Effector of steroid-mediated apoptosis during insect metamorphosis. Overexpression promotes programmed cell death. Interaction with Diap1 is required to suppress Dronc-mediated cell death; via Diap1-mediated ubiquitination of Dronc. Rate-limiting caspase in rpr, grim and hid death pathway. Recruited to the Dark apoptosome, an adapter protein complex that mediates activation of the caspase cascade in programmed cell death initiated by the intrinsic apoptosis pathway. Association with the Dark apoptosome stimulates autocatalytic cleavage and activation of Dronc, promoting Dronc-mediated cleavage of downstream effector caspases such as Drice. This chain is Caspase Dronc, found in Drosophila melanogaster (Fruit fly).